We begin with the raw amino-acid sequence, 144 residues long: MLIPKRVKYRKQHRGRPGGGMAKGGKEINFGEYGLMALEPAWITNRQIEAARIAMTRHIKRGGKVWIRIFPDKPITAKPAETRMGSGKGTPEYWVAVVKPGRIMFELAGVTEEVAREAMRLASHKLPIKTKFVKRGEVGEVNEG.

A compositionally biased stretch (basic residues) spans 1–16; sequence MLIPKRVKYRKQHRGR. Residues 1–23 are disordered; that stretch reads MLIPKRVKYRKQHRGRPGGGMAK.

Belongs to the universal ribosomal protein uL16 family. As to quaternary structure, part of the 50S ribosomal subunit.

In terms of biological role, binds 23S rRNA and is also seen to make contacts with the A and possibly P site tRNAs. The polypeptide is Large ribosomal subunit protein uL16 (Pelotomaculum thermopropionicum (strain DSM 13744 / JCM 10971 / SI)).